Here is a 694-residue protein sequence, read N- to C-terminus: N,N-dimethylglycine/sarcosine dehydrogenase (694 aa).

This sequence in the N-terminal section; belongs to the NADH:flavin oxidoreductase/NADH oxidase family. As to quaternary structure, monomer. The purified enzyme exists in the form of a monomer, dimer or polymer under non-denaturing conditions, but only the monomeric protein exhibits enzyme activity. FAD is required as a cofactor. It depends on NAD(+) as a cofactor. The cofactor is NADP(+).

It is found in the cytoplasm. The enzyme catalyses oxidized 2[4Fe-4S]-[ferredoxin] + N,N-dimethylglycine + H2O = reduced 2[4Fe-4S]-[ferredoxin] + sarcosine + formaldehyde + 2 H(+). It catalyses the reaction oxidized 2[4Fe-4S]-[ferredoxin] + sarcosine + H2O = reduced 2[4Fe-4S]-[ferredoxin] + formaldehyde + glycine + 2 H(+). Its activity is regulated as follows. Ca(2+) increases the activity by 12%, while the other metal ions tested have no or slightly inhibitory effects. The chelating agent EDTA inhibits the activity by 33%. Functionally, involved in degradation of glycine betaine. Catalyzes the demethylation of both N,N-dimethylglycine (DMG) and sarcosine, releasing formaldehyde and forming glycine as the final product. Does not show activity toward trimethylamine (TMA), histamine, glycine betaine (GB) or choline. The C-N bond in DMG is probably oxidized by removal of a hydride equivalent to form a labile imine intermediate, which is then spontaneously hydrolyzed in the presence of water, producing sarcosine and formaldehyde. The two protons subtracted from DMG are transferred to the non-covalently bound FAD, resulting in the reduced form of FAD, which is subsequently reoxidized by coupling with reduction of the enzyme-bound NAD(P)(+). Regeneration of NAD(P)(+) is achieved by electron transfer to the [4Fe-4S] cluster in the probable membrane-anchored ferredoxin csal_0991. The sequence is that of N,N-dimethylglycine/sarcosine dehydrogenase from Chromohalobacter salexigens (strain ATCC BAA-138 / DSM 3043 / CIP 106854 / NCIMB 13768 / 1H11).